Reading from the N-terminus, the 160-residue chain is Phosphopantetheine adenylyltransferase (160 aa).

T10 provides a ligand contact to substrate. Residues 10-11 (TF) and H18 contribute to the ATP site. Substrate contacts are provided by K42, L74, and R88. ATP is bound by residues 89–91 (GLR), E99, and 124–130 (NSFISST).

Belongs to the bacterial CoaD family. As to quaternary structure, homohexamer. It depends on Mg(2+) as a cofactor.

It localises to the cytoplasm. It catalyses the reaction (R)-4'-phosphopantetheine + ATP + H(+) = 3'-dephospho-CoA + diphosphate. It functions in the pathway cofactor biosynthesis; coenzyme A biosynthesis; CoA from (R)-pantothenate: step 4/5. In terms of biological role, reversibly transfers an adenylyl group from ATP to 4'-phosphopantetheine, yielding dephospho-CoA (dPCoA) and pyrophosphate. In Aeromonas salmonicida (strain A449), this protein is Phosphopantetheine adenylyltransferase.